The chain runs to 503 residues: Drimenol monooxygenase (503 aa).

The chain crosses the membrane as a helical span at residues 7 to 23 (MICIVVSGLLLYSSRTS). Residue Ser-471 participates in heme binding.

Belongs to the cytochrome P450 family. Heme serves as cofactor.

The protein resides in the membrane. The enzyme catalyses (5S,9S,10S)-drim-7-en-11-ol + reduced [NADPH--hemoprotein reductase] + O2 = (5S,10S)-(9R)-7-drimene-11,12-diol + oxidized [NADPH--hemoprotein reductase] + H2O + H(+). In terms of biological role, catalyzes the conversion of drimenol to drimendiol, a precursor of the sesquiterpenoid polygodial. Polygodial has been shown to be an antifeedant for a number of herbivorous insects. This is Drimenol monooxygenase from Persicaria hydropiper (Marshpepper knotweed).